Here is a 588-residue protein sequence, read N- to C-terminus: Synaptotagmin-3 (588 aa).

Over 1 to 54 (MSGDYEDDLCRRALILVSDLCARIRDADTNDRCQEFNELRIRGYPRGPDADISV) the chain is Vesicular. The interval 10 to 34 (CRRALILVSDLCARIRDADTNDRCQ) is cysteine motif. Residues 55-75 (SLLSVIVTFCGIVLLGVSLFV) form a helical membrane-spanning segment. Topologically, residues 76 to 588 (SWKLCWVPWR…KGLSEKENSE (513 aa)) are cytoplasmic. Disordered regions lie at residues 129-161 (GGPH…PEPS), 183-222 (PSQT…VTSL), and 238-257 (QTLT…ALPL). Low complexity predominate over residues 183–205 (PSQTSPELPSEGGTGSGLLLLPP). Residues 213–222 (AQSHQQVTSL) are compositionally biased toward polar residues. At arginine 286 the chain carries Omega-N-methylarginine. 2 consecutive C2 domains span residues 297–418 (PCGR…PLWR) and 429–563 (DLGE…EHWH). The Ca(2+) site is built by aspartate 328, aspartate 334, aspartate 386, phenylalanine 387, aspartate 388, serine 391, aspartate 394, aspartate 460, aspartate 466, aspartate 520, and aspartate 522.

The protein belongs to the synaptotagmin family. In terms of assembly, homodimer; disulfide-linked via the cysteine motif. Can also form heterodimers with SYT6, SYT9 and SYT10. The cofactor is Ca(2+). In terms of tissue distribution, brain, various endocrine tissues and hormone-secreting clonal cells.

Its subcellular location is the cell membrane. The protein localises to the cytoplasmic vesicle. It localises to the secretory vesicle membrane. In terms of biological role, ca(2+) sensor involved in Ca(2+)-dependent exocytosis of secretory vesicles through Ca(2+) and phospholipid binding to the C2 domain. Ca(2+) induces binding of the C2-domains to phospholipid membranes and to assembled SNARE-complexes; both actions contribute to triggering exocytosis. Plays a role in dendrite formation by melanocytes. This is Synaptotagmin-3 (Syt3) from Rattus norvegicus (Rat).